The sequence spans 288 residues: MMIRLRRAIDSAVTQLEEAGIGSARCDAEQLAAHLAGTDRGRLALLDTPGEEFFRRYSDAVAARSRRVPLQHLIGTVSFGPVVLHVGPDVFIPRPETEAILAWVMAQRLPERPVIVDACTGSGALAVALAHHRPAARVIGIDDSDSALDYARRNAEGTAVECVRADVTTPALLPELDGCVDLFVANPPYVPDDPVVQSILEPEVTQYDPRHAVFGGPDGMALTADIVGLAGRWLRPGGLFAVEHDDSTSVPTLDLVYRTDLFDDVLTHRDLAGRPRFVTARRRESWSA.

Positions 142 and 186 each coordinate S-adenosyl-L-methionine. 186 to 189 (NPPY) lines the substrate pocket.

Belongs to the protein N5-glutamine methyltransferase family. PrmC subfamily.

It carries out the reaction L-glutaminyl-[peptide chain release factor] + S-adenosyl-L-methionine = N(5)-methyl-L-glutaminyl-[peptide chain release factor] + S-adenosyl-L-homocysteine + H(+). Methylates the class 1 translation termination release factors RF1/PrfA and RF2/PrfB on the glutamine residue of the universally conserved GGQ motif. The polypeptide is Release factor glutamine methyltransferase (Mycobacterium leprae (strain TN)).